The chain runs to 259 residues: Sugar fermentation stimulation protein homolog (259 aa).

It belongs to the SfsA family.

This chain is Sugar fermentation stimulation protein homolog, found in Prochlorococcus marinus (strain MIT 9303).